The primary structure comprises 239 residues: Terpene cyclase idtB (239 aa).

The next 5 helical transmembrane spans lie at 20 to 40, 50 to 70, 75 to 95, 113 to 133, and 138 to 158; these read MADT…ALMI, CMAL…TIVY, RVEL…MVGA, AGFI…ALAM, and GLAY…GGLF. N164 carries N-linked (GlcNAc...) asparagine glycosylation. Residues 197 to 217 traverse the membrane as a helical segment; it reads EVFGWLASPLVLWSLVTFLLA.

It belongs to the paxB family.

Its subcellular location is the membrane. Its pathway is secondary metabolite biosynthesis. Functionally, terpene cyclase; part of the gene cluster that mediates the biosynthesis of paspalitrems, indole-diterpene (IDT) mycotoxins that are potent tremorgens in mammals. The geranylgeranyl diphosphate (GGPP) synthase idtG is proposed to catalyze the first step in IDT biosynthesis via catalysis of a series of iterative condensations of isopentenyl diphosphate (IPP) with dimethylallyl diphosphate (DMAPP), geranyl diphosphate (GPP), and farnesyl diphosphate (FPP), to form GGPP. Condensation of indole-3-glycerol phosphate with GGPP by the prenyltransferase idtC then forms 3-geranylgeranylindole (3-GGI). Epoxidation of the two terminal alkenes of the geranylgeranyl moiety by the FAD-dependent monooxygenase idtM, and cyclization by the terpene cyclase idtB then leads to the production of paspaline. The cytochrome P450 monooxygenase idtP then catalyzes oxidative elimination of the pendant methyl group at C-12 of paspaline and generates the C-10 ketone to yield 13-desoxypaxilline. The cytochrome P450 monooxygenase idtQ may catalyze the C-13 oxidation of 13-desoxypaxilline to afford paxilline. Considering that both paspalicine and paxilline were detected in C.paspali, idtQ also catalyzes the formation of paspalinine from 13-desoxypaxilline via paspalicine as an intermediate. Finally, the alpha-prenyltransferase idtF prenylates paspalinine at the C-20 or the C-21 positions to yield paspalitrems A and C, respectively. The hydroxylation of paspalitrem A at C-32 by a still unknown oxidase affords paspalitrem B. The sequence is that of Terpene cyclase idtB from Claviceps paspali (Rye ergot fungus).